Reading from the N-terminus, the 321-residue chain is PI-PLC X domain-containing protein 3 (321 aa).

The PI-PLC X-box domain occupies 22–197 (SMHSIPLTNL…DYQVLVFYHS (176 aa)). Residues His-37 and His-114 contribute to the active site.

Expressed at highest levels in heart. Also detected in kidney, lung, small intestine and colon. Expressed at very low levels, if any, in leukocytes, thymus and skeletal muscle.

It is found in the cytoplasm. The sequence is that of PI-PLC X domain-containing protein 3 (PLCXD3) from Homo sapiens (Human).